The chain runs to 280 residues: Protease HtpX (280 aa).

Transmembrane regions (helical) follow at residues 7–26 and 30–49; these read TFIL…GLLG and GMLV…YWYS. A Zn(2+)-binding site is contributed by H129. E130 is an active-site residue. Position 133 (H133) interacts with Zn(2+). 2 consecutive transmembrane segments (helical) span residues 146 to 166 and 178 to 198; these read ATIA…SMFG and VVGM…QMAI. A Zn(2+)-binding site is contributed by E203.

Belongs to the peptidase M48B family. Requires Zn(2+) as cofactor.

It localises to the cell inner membrane. In Legionella pneumophila (strain Lens), this protein is Protease HtpX.